The sequence spans 284 residues: RNase adapter protein RapZ (284 aa).

Position 8–15 (G8–S15) interacts with ATP. D56–N59 serves as a coordination point for GTP. The tract at residues R266–T284 is RNA-binding.

This sequence belongs to the RapZ-like family. RapZ subfamily. As to quaternary structure, homotrimer.

Modulates the synthesis of GlmS, by affecting the processing and stability of the regulatory small RNA GlmZ. When glucosamine-6-phosphate (GlcN6P) concentrations are high in the cell, RapZ binds GlmZ and targets it to cleavage by RNase E. Consequently, GlmZ is inactivated and unable to activate GlmS synthesis. Under low GlcN6P concentrations, RapZ is sequestered and inactivated by an other regulatory small RNA, GlmY, preventing GlmZ degradation and leading to synthesis of GlmS. This chain is RNase adapter protein RapZ, found in Salmonella typhi.